Consider the following 596-residue polypeptide: Pentatricopeptide repeat-containing protein At1g80270, mitochondrial (596 aa).

The N-terminal 69 residues, 1 to 69, are a transit peptide targeting the mitochondrion; it reads MFALSKVLRR…RALSSSAGTK (69 aa). The segment at 62-119 is disordered; that stretch reads LSSSAGTKSDQEEDDLEDGFSELEGSKSGQGSTSSDEDEGKLSADEEEEEELDLIETD. 2 stretches are compositionally biased toward acidic residues: residues 72–82 and 96–117; these read QEEDDLEDGFS and SDEDEGKLSADEEEEEELDLIE. PPR repeat units follow at residues 228–262, 263–296, 297–331, 332–366, 367–397, 399–433, 434–468, 469–503, and 505–539; these read GEVLYRTLLANCVAAGNVKKSELVFNKMKDLGFPL, SGFTCDQMLLLHKRIDRKKIADVLLLMEKENIKP, SLLTYKILIDVKGATNDISGMEQILETMKDEGVEL, DFQTQALTARHYSGAGLKDKAEKVLKEMEGESLEA, NRRAFKDLLSIYASLGREDEVKRIWKICESK, YFEESLAAIQAFGKLNKVQEAEAIFEKIVKMDRRA, SSSTYSVLLRVYVDHKMLSKGKDLVKRMAESGCRI, EATTWDALIKLYVEAGEVEKADSLLDKASKQSHTK, and MMNSFMYIMDEYSKRGDVHNTEKIFLKMREAGYTS.

Belongs to the PPR family. P subfamily.

It localises to the mitochondrion. This is Pentatricopeptide repeat-containing protein At1g80270, mitochondrial from Arabidopsis thaliana (Mouse-ear cress).